The sequence spans 463 residues: Trigger factor (463 aa).

The PPIase FKBP-type domain maps to 162–243 (GDVVTLDLEA…VSQVAARELP (82 aa)). The segment at 427 to 463 (TNGEIVDLDDEDETESTPETTEAAEAAEESTEDKPEA) is disordered. Positions 432–442 (VDLDDEDETES) are enriched in acidic residues.

Belongs to the FKBP-type PPIase family. Tig subfamily.

Its subcellular location is the cytoplasm. The enzyme catalyses [protein]-peptidylproline (omega=180) = [protein]-peptidylproline (omega=0). Its function is as follows. Involved in protein export. Acts as a chaperone by maintaining the newly synthesized protein in an open conformation. Functions as a peptidyl-prolyl cis-trans isomerase. The polypeptide is Trigger factor (Streptomyces avermitilis (strain ATCC 31267 / DSM 46492 / JCM 5070 / NBRC 14893 / NCIMB 12804 / NRRL 8165 / MA-4680)).